The sequence spans 37 residues: Large ribosomal subunit protein bL36 (37 aa).

This sequence belongs to the bacterial ribosomal protein bL36 family.

The sequence is that of Large ribosomal subunit protein bL36 (rpmJ) from Fusobacterium nucleatum subsp. nucleatum (strain ATCC 25586 / DSM 15643 / BCRC 10681 / CIP 101130 / JCM 8532 / KCTC 2640 / LMG 13131 / VPI 4355).